The sequence spans 340 residues: HTH-type transcriptional regulator VirS (340 aa).

An HTH araC/xylS-type domain is found at 236–334 (ERVVGLARRL…GMTPRQYRAY (99 aa)). DNA-binding regions (H-T-H motif) lie at residues 254 to 275 (EAIADQLDMHPRTLQRRLAAEG) and 301 to 324 (LSQIAVLLGYSEQSALNRSCRRWF).

In terms of processing, phosphorylated by PknK. Phosphorylation increases affinity for the mymA promoter.

Regulates the expression of the mymA operon. This is HTH-type transcriptional regulator VirS (virS) from Mycobacterium tuberculosis (strain CDC 1551 / Oshkosh).